The following is a 308-amino-acid chain: 1D-myo-inositol 2-acetamido-2-deoxy-alpha-D-glucopyranoside deacetylase (308 aa).

The Zn(2+) site is built by histidine 37, aspartate 40, and histidine 171.

Belongs to the MshB deacetylase family. The cofactor is Zn(2+).

The enzyme catalyses 1D-myo-inositol 2-acetamido-2-deoxy-alpha-D-glucopyranoside + H2O = 1D-myo-inositol 2-amino-2-deoxy-alpha-D-glucopyranoside + acetate. Functionally, catalyzes the deacetylation of 1D-myo-inositol 2-acetamido-2-deoxy-alpha-D-glucopyranoside (GlcNAc-Ins) in the mycothiol biosynthesis pathway. The chain is 1D-myo-inositol 2-acetamido-2-deoxy-alpha-D-glucopyranoside deacetylase from Mycobacterium sp. (strain KMS).